Reading from the N-terminus, the 348-residue chain is Calcium-gated potassium channel TvoK (348 aa).

The next 3 membrane-spanning stretches (helical) occupy residues 19–39 (LTKV…LEFL), 52–72 (YFTA…GDVV), and 80–100 (VVAM…TATI). The RCK N-terminal domain maps to 120–246 (KNHTIICNWN…VSAGATEVLS (127 aa)). The RCK C-terminal domain maps to 266–348 (DFILKSLSET…KKEVEEAIKG (83 aa)).

In terms of assembly, heterooctamer composed of four full-length subunits and four soluble RCK domains.

The protein localises to the cell membrane. In terms of biological role, calcium-gated potassium channel. Can also be activated by Mg(2+), Mn(2+) and Ni(2+). In Thermoplasma volcanium (strain ATCC 51530 / DSM 4299 / JCM 9571 / NBRC 15438 / GSS1), this protein is Calcium-gated potassium channel TvoK.